A 1277-amino-acid polypeptide reads, in one-letter code: DNA repair protein RAD5B (1277 aa).

Positions 271 to 293 (KLEQENDDLFSSGDSDGTSAKRR) are disordered. The 198-residue stretch at 674-871 (PTATQMARGG…YSLLCFLHVE (198 aa)) folds into the Helicase ATP-binding domain. 687–694 (DAMGLGKT) serves as a coordination point for ATP. The DEAH box signature appears at 822-825 (DEAH). The RING-type zinc finger occupies 1040–1080 (CPICLESADDPVLTPCAHRMCRECLLTSWRSPSCGLCPICR). The region spanning 1113–1277 (ELLKCLEKIK…RLEELKMLFR (165 aa)) is the Helicase C-terminal domain.

This sequence belongs to the SNF2/RAD54 helicase family. RAD16 subfamily.

Its subcellular location is the nucleus. Its function is as follows. Possesses intrinsic ATP-dependent nucleosome-remodeling activity. This activity may be required for DNA repair. Does not seem to be required for DNA repair and regulation of homologous recombination (HR). The sequence is that of DNA repair protein RAD5B from Arabidopsis thaliana (Mouse-ear cress).